A 274-amino-acid chain; its full sequence is Shikimate dehydrogenase (NADP(+)) (274 aa).

Shikimate-binding positions include 14 to 16 and threonine 60; that span reads SKS. The active-site Proton acceptor is lysine 64. Position 76 (glutamate 76) interacts with NADP(+). Positions 85 and 101 each coordinate shikimate. NADP(+)-binding positions include 126–130, 150–155, and methionine 214; these read GAGGA and NRTARK. Tyrosine 216 serves as a coordination point for shikimate. Glycine 238 serves as a coordination point for NADP(+).

The protein belongs to the shikimate dehydrogenase family. In terms of assembly, homodimer.

It catalyses the reaction shikimate + NADP(+) = 3-dehydroshikimate + NADPH + H(+). The protein operates within metabolic intermediate biosynthesis; chorismate biosynthesis; chorismate from D-erythrose 4-phosphate and phosphoenolpyruvate: step 4/7. Functionally, involved in the biosynthesis of the chorismate, which leads to the biosynthesis of aromatic amino acids. Catalyzes the reversible NADPH linked reduction of 3-dehydroshikimate (DHSA) to yield shikimate (SA). The protein is Shikimate dehydrogenase (NADP(+)) of Pseudomonas aeruginosa (strain ATCC 15692 / DSM 22644 / CIP 104116 / JCM 14847 / LMG 12228 / 1C / PRS 101 / PAO1).